We begin with the raw amino-acid sequence, 840 residues long: Telomere length regulation protein TEL2 homolog (840 aa).

Methionine 1 is modified (N-acetylmethionine). Proline 374, proline 419, and proline 422 each carry hydroxyproline. Residues 443-497 (PEPAGDCSSVSRGPSPAPVDTESPVEMPEKAVESDVPPTQPQGSDSELDSDDEFI) form a disordered region. Phosphoserine is present on serine 457. Phosphoserine; by CK2 is present on serine 486. Serine 488, serine 492, and serine 837 each carry phosphoserine. Over residues 488 to 497 (SELDSDDEFI) the composition is skewed to acidic residues.

It belongs to the TEL2 family. Component of the TTT complex composed of TELO2, TTI1 and TTI2. Interacts with ATM, ATR, MTOR, PRKDC, RUVBL2, TTI1, TTI2, SMG1 and TRRAP. Component of the mTORC1 and mTORC2 complexes. Interacts (phosphorylated form) with PIH1D1. Interaction with PIH1D1 mediates interaction of TELO2 with the R2TP complex composed of RUVBL1, RUVBL2, PIH1D1, and RPAP3. In terms of processing, hydroxylation by PHD3 is required for a proper interaction with ATR, and activation of the ATR/CHK1/p53 pathway following DNA damage. Post-translationally, phosphorylated at Ser-486 by CK2 following growth factor deprivation, leading to its subsequent ubiquitination by the SCF(FBXO9) complex. Phosphorylation by CK2 only takes place when TELO2 is bound to mTORC1, not mTORC2; leading to selective ubiquitination of mTORC1-associated protein. Ubiquitinated by the SCF(FBXO9) complex following phosphorylation by CK2 in response to growth factor deprivation, leading to its degradation by the proteasome. Only mTORC1-associated protein is ubiquitinated and degraded, leading to selective inactivation of mTORC1 to restrain cell growth and protein translation, while mTORC2 is activated due to the relief of feedback inhibition by mTORC1.

It localises to the cytoplasm. The protein localises to the membrane. Its subcellular location is the nucleus. It is found in the chromosome. The protein resides in the telomere. Functionally, regulator of the DNA damage response (DDR). Part of the TTT complex that is required to stabilize protein levels of the phosphatidylinositol 3-kinase-related protein kinase (PIKK) family proteins. The TTT complex is involved in the cellular resistance to DNA damage stresses, like ionizing radiation (IR), ultraviolet (UV) and mitomycin C (MMC). Together with the TTT complex and HSP90 may participate in the proper folding of newly synthesized PIKKs. Promotes assembly, stabilizes and maintains the activity of mTORC1 and mTORC2 complexes, which regulate cell growth and survival in response to nutrient and hormonal signals. May be involved in telomere length regulation. In Mus musculus (Mouse), this protein is Telomere length regulation protein TEL2 homolog (Telo2).